A 325-amino-acid polypeptide reads, in one-letter code: G/U mismatch-specific uracil DNA glycosylase (325 aa).

A compositionally biased stretch (basic and acidic residues) spans 1 to 11; that stretch reads MNDIETRDTGT. Residues 1 to 50 are disordered; it reads MNDIETRDTGTKNDNSSEFNLSVKSHKRKRSFDDENLELEESREETSGGI. Over residues 12-23 the composition is skewed to polar residues; sequence KNDNSSEFNLSV. A compositionally biased stretch (acidic residues) spans 34–43; it reads DENLELEESR.

Belongs to the uracil-DNA glycosylase (UDG) superfamily. TDG/mug family.

It is found in the nucleus. The catalysed reaction is Specifically hydrolyzes mismatched double-stranded DNA and polynucleotides, releasing free uracil.. In terms of biological role, removes uracil from G/U mispairs in ssDNA. Also corrects G/G mispairs. Does not catalyze the removal of thymine from G/T mispairs. In Schizosaccharomyces pombe (strain 972 / ATCC 24843) (Fission yeast), this protein is G/U mismatch-specific uracil DNA glycosylase (thp1).